The primary structure comprises 833 residues: Leucine--tRNA ligase (833 aa).

A 'HIGH' region motif is present at residues 41 to 52 (PYPSGAGLHVGH). The 'KMSKS' region signature appears at 610 to 614 (KMSKS). Residue lysine 613 coordinates ATP.

The protein belongs to the class-I aminoacyl-tRNA synthetase family.

It is found in the cytoplasm. It carries out the reaction tRNA(Leu) + L-leucine + ATP = L-leucyl-tRNA(Leu) + AMP + diphosphate. This is Leucine--tRNA ligase from Streptococcus pyogenes serotype M12 (strain MGAS2096).